The primary structure comprises 826 residues: Eukaryotic translation initiation factor 3 subunit C (826 aa).

2 disordered regions span residues 1–71 (MSRF…GKGA) and 205–227 (SGGD…PRAK). Acidic residues predominate over residues 10–20 (DSDDSSSDEDL). The span at 21–30 (YGSGSESGSD) shows a compositional bias: low complexity. The span at 32 to 65 (SQDEQDGGDDNDDDMSDDSMFADDSDDDSDDDED) shows a compositional bias: acidic residues. Over residues 218 to 227 (KEDKPKPRAK) the composition is skewed to basic and acidic residues. The region spanning 605-779 (FHTHINLELL…NSVVFTQAVQ (175 aa)) is the PCI domain.

The protein belongs to the eIF-3 subunit C family. As to quaternary structure, component of the eukaryotic translation initiation factor 3 (eIF-3) complex.

The protein localises to the cytoplasm. In terms of biological role, component of the eukaryotic translation initiation factor 3 (eIF-3) complex, which is involved in protein synthesis of a specialized repertoire of mRNAs and, together with other initiation factors, stimulates binding of mRNA and methionyl-tRNAi to the 40S ribosome. The eIF-3 complex specifically targets and initiates translation of a subset of mRNAs involved in cell proliferation. The sequence is that of Eukaryotic translation initiation factor 3 subunit C from Yarrowia lipolytica (strain CLIB 122 / E 150) (Yeast).